The primary structure comprises 392 residues: MGSLSTANVEFCLDVFKELNSNNIGDNIFFSSLSLLYALSMVLLGARGETEEQLEKVLHFSHTVDSLKPGFKDSPKCSQAGRIHSEFGVEFSQINQPDSNCTLSIANRLYGTKTMAFHQQYLSCSEKWYQARLQTVDFEQSTEETRKTINAWVENKTNGKVANLFGKSTIDPSSVMVLVNAIYFKGQWQNKFQVRETVKSPFQLSEGKNVTVEMMYQIGTFKLAFVKEPQMQVLELPYVNNKLSMIILLPVGIANLKQIEKQLNSGTFHEWTSSSNMMEREVEVHLPRFKLETKYELNSLLKSLGVTDLFNQVKADLSGMSPTKGLYLSKAIHKSYLDVSEEGTEAAAATGDSIAVKSLPMRAQFKANHPFLFFIRHTHTNTILFCGKLASP.

The RCL stretch occupies residues 341–365 (EEGTEAAAATGDSIAVKSLPMRAQF).

It belongs to the serpin family. Ov-serpin subfamily. As to expression, detected in a restricted number of tissues, including lung, placenta, prostate, and tonsil.

It localises to the cytoplasm. Has no serine protease inhibitory activity, probably due to variants in the scaffold impairing conformational change. This Homo sapiens (Human) protein is Serpin B11 (SERPINB11).